Here is a 445-residue protein sequence, read N- to C-terminus: MSNRKYFGTDGIRGRVGDAPITPDFVLKLGWAAGKVLARHGSRKIIISKDTRISGYMLESALEAGLAAAGLSALFTGPMPTPAVAYLTRTFRAEAGIVISASHNPFYDNGIKFFSIDGTKLPDAVEEAIEAEMEKEISCVDSAELGKASRIVDAAGRYIEFCKATFPNELSLSELKIVVDCANGATYHIAPNVLRELGANVIAIGCEPNGVNINAEVGATDVRALQARVLAEKADLGIAFDGDGDRVIMVDHEGNKVDGDQIMYIIAREGLRQGQLRGGAVGTLMSNMGLELALKQLGIPFARAKVGDRYVLEKMQEKGWRIGAENSGHVILLDKTTTGDGIVAGLQVLAAMARNHMSLHDLCSGMKMFPQILVNVRYTAGSGDPLEHESVKAVTAEVEAALGNRGRVLLRKSGTEPLIRVMVEGEDEAQVTEFAHRIADAVKAV.

The Phosphoserine intermediate role is filled by Ser102. Mg(2+)-binding residues include Ser102, Asp241, Asp243, and Asp245. At Ser102 the chain carries Phosphoserine.

The protein belongs to the phosphohexose mutase family. It depends on Mg(2+) as a cofactor. Activated by phosphorylation.

It carries out the reaction alpha-D-glucosamine 1-phosphate = D-glucosamine 6-phosphate. Catalyzes the conversion of glucosamine-6-phosphate to glucosamine-1-phosphate. The chain is Phosphoglucosamine mutase from Shigella boydii serotype 4 (strain Sb227).